The sequence spans 557 residues: 2-isopropylmalate synthase (557 aa).

Residues 31 to 304 form the Pyruvate carboxyltransferase domain; that stretch reads PTWCSVDLRD…DPGLNFASML (274 aa). Residues Asp40, His243, His245, and Asn279 each contribute to the Mg(2+) site. The regulatory domain stretch occupies residues 439–557; the sequence is IENPIKFLNF…NTMIKDSAAV (119 aa).

It belongs to the alpha-IPM synthase/homocitrate synthase family. LeuA type 2 subfamily. Homodimer. Mg(2+) is required as a cofactor.

It localises to the cytoplasm. The catalysed reaction is 3-methyl-2-oxobutanoate + acetyl-CoA + H2O = (2S)-2-isopropylmalate + CoA + H(+). The protein operates within amino-acid biosynthesis; L-leucine biosynthesis; L-leucine from 3-methyl-2-oxobutanoate: step 1/4. Functionally, catalyzes the condensation of the acetyl group of acetyl-CoA with 3-methyl-2-oxobutanoate (2-ketoisovalerate) to form 3-carboxy-3-hydroxy-4-methylpentanoate (2-isopropylmalate). The chain is 2-isopropylmalate synthase from Desulfitobacterium hafniense (strain Y51).